Reading from the N-terminus, the 436-residue chain is 3-ketoacyl-CoA thiolase (436 aa).

Cys-99 (acyl-thioester intermediate) is an active-site residue. Catalysis depends on proton acceptor residues His-392 and Cys-422.

It belongs to the thiolase-like superfamily. Thiolase family. Heterotetramer of two alpha chains (FadJ) and two beta chains (FadI).

The protein localises to the cytoplasm. The catalysed reaction is an acyl-CoA + acetyl-CoA = a 3-oxoacyl-CoA + CoA. It functions in the pathway lipid metabolism; fatty acid beta-oxidation. Functionally, catalyzes the final step of fatty acid oxidation in which acetyl-CoA is released and the CoA ester of a fatty acid two carbons shorter is formed. This is 3-ketoacyl-CoA thiolase from Enterobacter sp. (strain 638).